A 282-amino-acid chain; its full sequence is MSDFSMETLKTLRQQTGVGLTKCKEALEACGGNLEEAVVYLRKLGLASAGKKEHRETKEGIIAAKTDANGTALIEVNVETDFVANNAVFREFVSNLLNDILKYKVDTVEALSQAASSQDPSLSVDELRAVTMQTVGENIRISRVAYFPKATNSTVGIYSHGNGKTVALTMLSGSSTADSLAKDIAMHVVAAQPQFLSKESVPAEAIAKEKEVIASQIQGKPQEVIEKIVTGKLNTFFQEACLLEQPFIKNADLSIQSLIDDFSKTSGSSVAIEQFILWKIGA.

The involved in Mg(2+) ion dislocation from EF-Tu stretch occupies residues 80–83 (TDFV).

Belongs to the EF-Ts family.

Its subcellular location is the cytoplasm. Functionally, associates with the EF-Tu.GDP complex and induces the exchange of GDP to GTP. It remains bound to the aminoacyl-tRNA.EF-Tu.GTP complex up to the GTP hydrolysis stage on the ribosome. In Chlamydia pneumoniae (Chlamydophila pneumoniae), this protein is Elongation factor Ts (tsf).